Here is a 282-residue protein sequence, read N- to C-terminus: Keratin-associated protein 10-1 (282 aa).

24 repeat units span residues 26–30 (CCEPH), 31–35 (CCALS), 36–40 (CCAPA), 57–61 (CCQAA), 79–83 (CCQQS), 89–93 (CCTSS), 99–103 (CCVPV), 104–108 (CCKPV), 109–113 (CCLPT), 121–125 (CCQQS), 131–135 (CCASS), 141–145 (CCVPV), 146–150 (CCKPV), 163–167 (CCQQS), 173–177 (CCTSS), 183–187 (CCVPV), 193–197 (CCKPI), 198–202 (CCVPV), 210–214 (CCQQS), 220–224 (CCTTS), 225–229 (CCRPS), 244–248 (CCMPV), 251–255 (CCAPA), and 262–266 (CCRPA). The 24 X 5 AA repeats of C-C-X(3) stretch occupies residues 26–266 (CCEPHCCALS…SCQASCCRPA (241 aa)).

Belongs to the KRTAP type 10 family. Interacts with hair keratins. Restricted to a narrow region of the hair fiber cuticle, lying approximately 20 cell layers above the apex of the dermal papilla of the hair root; not detected in any other tissues.

In terms of biological role, in the hair cortex, hair keratin intermediate filaments are embedded in an interfilamentous matrix, consisting of hair keratin-associated proteins (KRTAP), which are essential for the formation of a rigid and resistant hair shaft through their extensive disulfide bond cross-linking with abundant cysteine residues of hair keratins. The matrix proteins include the high-sulfur and high-glycine-tyrosine keratins. The sequence is that of Keratin-associated protein 10-1 (KRTAP10-1) from Homo sapiens (Human).